The chain runs to 229 residues: Large ribosomal subunit protein uL1 (229 aa).

It belongs to the universal ribosomal protein uL1 family. As to quaternary structure, part of the 50S ribosomal subunit.

In terms of biological role, binds directly to 23S rRNA. The L1 stalk is quite mobile in the ribosome, and is involved in E site tRNA release. Functionally, protein L1 is also a translational repressor protein, it controls the translation of the L11 operon by binding to its mRNA. This is Large ribosomal subunit protein uL1 from Mannheimia succiniciproducens (strain KCTC 0769BP / MBEL55E).